Consider the following 199-residue polypeptide: Nucleoid occlusion factor SlmA (199 aa).

An HTH tetR-type domain is found at 10-71 (RNRREEILQA…SLIEFIEDSL (62 aa)). Residues 34-53 (TTAKLAANVGVSEAALYRHF) constitute a DNA-binding region (H-T-H motif). Residues 120–140 (NRLQGRINQLFERIEVQIRQV) adopt a coiled-coil conformation.

This sequence belongs to the nucleoid occlusion factor SlmA family. In terms of assembly, homodimer. Interacts with FtsZ.

It localises to the cytoplasm. The protein resides in the nucleoid. Its function is as follows. Required for nucleoid occlusion (NO) phenomenon, which prevents Z-ring formation and cell division over the nucleoid. Acts as a DNA-associated cell division inhibitor that binds simultaneously chromosomal DNA and FtsZ, and disrupts the assembly of FtsZ polymers. SlmA-DNA-binding sequences (SBS) are dispersed on non-Ter regions of the chromosome, preventing FtsZ polymerization at these regions. This Photorhabdus laumondii subsp. laumondii (strain DSM 15139 / CIP 105565 / TT01) (Photorhabdus luminescens subsp. laumondii) protein is Nucleoid occlusion factor SlmA.